The following is a 602-amino-acid chain: Aspartate--tRNA(Asp/Asn) ligase (602 aa).

E176 serves as a coordination point for L-aspartate. Residues 200–203 (QQFK) form an aspartate region. L-aspartate-binding residues include R222 and H452. Residue 222–224 (RDE) participates in ATP binding. E490 lines the ATP pocket. R497 lines the L-aspartate pocket. 542–545 (GIDR) contributes to the ATP binding site.

Belongs to the class-II aminoacyl-tRNA synthetase family. Type 1 subfamily. As to quaternary structure, homodimer.

The protein resides in the cytoplasm. The enzyme catalyses tRNA(Asx) + L-aspartate + ATP = L-aspartyl-tRNA(Asx) + AMP + diphosphate. Aspartyl-tRNA synthetase with relaxed tRNA specificity since it is able to aspartylate not only its cognate tRNA(Asp) but also tRNA(Asn). Reaction proceeds in two steps: L-aspartate is first activated by ATP to form Asp-AMP and then transferred to the acceptor end of tRNA(Asp/Asn). This chain is Aspartate--tRNA(Asp/Asn) ligase, found in Rickettsia conorii (strain ATCC VR-613 / Malish 7).